A 362-amino-acid chain; its full sequence is Porin Omp2b (362 aa).

A signal peptide spans methionine 1–alanine 22.

The protein belongs to the alphaproteobacteria porin family. In terms of assembly, homotrimer.

Its subcellular location is the cell outer membrane. Functionally, forms passive diffusion pores that allow small molecular weight hydrophilic materials across the outer membrane. The chain is Porin Omp2b (omp2b) from Brucella melitensis biotype 1 (strain ATCC 23456 / CCUG 17765 / NCTC 10094 / 16M).